The following is a 78-amino-acid chain: Defensin beta 136 (78 aa).

A signal peptide spans 1 to 21 (MNLCLSSLLFFLVILLPSGKG). 3 cysteine pairs are disulfide-bonded: Cys-33-Cys-60, Cys-40-Cys-54, and Cys-44-Cys-61.

This sequence belongs to the beta-defensin family.

It is found in the secreted. Host defense peptide that exhibits antimicrobial and antifungal activity. Exhibits antimicrobial activity against E.coli, S.aureus and C.albicans (in vitro). Has high lipopolysaccharide (LPS)-binding affinity, and may thereby be involved in immunoregulation through LPS neutralization. The sequence is that of Defensin beta 136 (DEFB136) from Pan troglodytes (Chimpanzee).